A 220-amino-acid chain; its full sequence is ATP phosphoribosyltransferase (220 aa).

This sequence belongs to the ATP phosphoribosyltransferase family. Short subfamily. As to quaternary structure, heteromultimer composed of HisG and HisZ subunits.

The protein localises to the cytoplasm. The catalysed reaction is 1-(5-phospho-beta-D-ribosyl)-ATP + diphosphate = 5-phospho-alpha-D-ribose 1-diphosphate + ATP. The protein operates within amino-acid biosynthesis; L-histidine biosynthesis; L-histidine from 5-phospho-alpha-D-ribose 1-diphosphate: step 1/9. Its function is as follows. Catalyzes the condensation of ATP and 5-phosphoribose 1-diphosphate to form N'-(5'-phosphoribosyl)-ATP (PR-ATP). Has a crucial role in the pathway because the rate of histidine biosynthesis seems to be controlled primarily by regulation of HisG enzymatic activity. The chain is ATP phosphoribosyltransferase from Anaeromyxobacter sp. (strain Fw109-5).